The chain runs to 126 residues: Profilin-2 (126 aa).

Residue Ser2 is modified to Blocked amino end (Ser). An N6,N6,N6-trimethyllysine modification is found at Lys104.

Belongs to the profilin family. Occurs in many kinds of cells as a complex with monomeric actin in a 1:1 ratio.

It localises to the cytoplasm. It is found in the cytoskeleton. In terms of biological role, binds to actin and affects the structure of the cytoskeleton. At high concentrations, profilin prevents the polymerization of actin, whereas it enhances it at low concentrations. By binding to PIP2, it inhibits the formation of IP3 and DG. The protein is Profilin-2 of Acanthamoeba castellanii (Amoeba).